Here is a 291-residue protein sequence, read N- to C-terminus: Putative fatty acid elongase 4 (291 aa).

Transmembrane regions (helical) follow at residues 46–66 (ILFQ…FILI), 79–99 (FTLK…SIIA), and 254–274 (NLYL…QFFV).

Belongs to the ELO family.

Its subcellular location is the membrane. It carries out the reaction a very-long-chain acyl-CoA + malonyl-CoA + H(+) = a very-long-chain 3-oxoacyl-CoA + CO2 + CoA. The protein operates within lipid metabolism; fatty acid biosynthesis. Could be implicated in synthesis of very long chain fatty acids. In Caenorhabditis elegans, this protein is Putative fatty acid elongase 4 (elo-4).